Here is a 117-residue protein sequence, read N- to C-terminus: Probable non-functional immunoglobulin heavy variable 3-16 (117 aa).

The signal sequence occupies residues 1–19 (MEFGLSWVFLAGILKGVQC). The tract at residues 20-44 (EVQLVESGGGLVQPGGSLRLSCAAS) is framework-1. The region spanning 21–117 (VQLVESGGGL…EDMAVYYCVR (97 aa)) is the Ig-like domain. C41 and C115 are oxidised to a cystine. Residues 45 to 52 (GFTFSNSD) are complementarity-determining-1. The tract at residues 53 to 69 (MNWARKAPGKGLEWVSG) is framework-2. A complementarity-determining-2 region spans residues 70-77 (VSWNGSRT). N73 carries an N-linked (GlcNAc...) asparagine glycan. The interval 78–115 (HYVDSVKRRFIISRDNSRNSLYLQKNRRRAEDMAVYYC) is framework-3. The segment at 116-117 (VR) is complementarity-determining-3.

As to quaternary structure, immunoglobulins are composed of two identical heavy chains and two identical light chains; disulfide-linked.

The protein resides in the secreted. It is found in the cell membrane. Probable non-functional open reading frame (ORF) of V region of the variable domain of immunoglobulin heavy chains. Non-functional ORF generally cannot participate in the synthesis of a productive immunoglobulin chain due to altered V-(D)-J or switch recombination and/or splicing site (at mRNA level) and/or conserved amino acid change (protein level). Immunoglobulins, also known as antibodies, are membrane-bound or secreted glycoproteins produced by B lymphocytes. In the recognition phase of humoral immunity, the membrane-bound immunoglobulins serve as receptors which, upon binding of a specific antigen, trigger the clonal expansion and differentiation of B lymphocytes into immunoglobulins-secreting plasma cells. Secreted immunoglobulins mediate the effector phase of humoral immunity, which results in the elimination of bound antigens. The antigen binding site is formed by the variable domain of one heavy chain, together with that of its associated light chain. Thus, each immunoglobulin has two antigen binding sites with remarkable affinity for a particular antigen. The variable domains are assembled by a process called V-(D)-J rearrangement and can then be subjected to somatic hypermutations which, after exposure to antigen and selection, allow affinity maturation for a particular antigen. The polypeptide is Probable non-functional immunoglobulin heavy variable 3-16 (Homo sapiens (Human)).